The following is a 350-amino-acid chain: Tetraacyldisaccharide 4'-kinase (350 aa).

49-56 (TTGGTGKT) is a binding site for ATP.

It belongs to the LpxK family.

It catalyses the reaction a lipid A disaccharide + ATP = a lipid IVA + ADP + H(+). The protein operates within glycolipid biosynthesis; lipid IV(A) biosynthesis; lipid IV(A) from (3R)-3-hydroxytetradecanoyl-[acyl-carrier-protein] and UDP-N-acetyl-alpha-D-glucosamine: step 6/6. Transfers the gamma-phosphate of ATP to the 4'-position of a tetraacyldisaccharide 1-phosphate intermediate (termed DS-1-P) to form tetraacyldisaccharide 1,4'-bis-phosphate (lipid IVA). The chain is Tetraacyldisaccharide 4'-kinase from Chlorobaculum tepidum (strain ATCC 49652 / DSM 12025 / NBRC 103806 / TLS) (Chlorobium tepidum).